Consider the following 91-residue polypeptide: Small ribosomal subunit protein uS19 (91 aa).

It belongs to the universal ribosomal protein uS19 family.

Functionally, protein S19 forms a complex with S13 that binds strongly to the 16S ribosomal RNA. This is Small ribosomal subunit protein uS19 from Trichodesmium erythraeum (strain IMS101).